A 381-amino-acid chain; its full sequence is MPFSNSHNTLKLRFPAEDEFPDLSGHNNHMAKVLTPELYAELRAKSTPSGFTLDDVIQAGVDNPGHPYIMTVGCVAGDEESYDVFKELFDPIIEDRHGGYKPSDEHKTDLNPDNLQGGDDLDPNYVLSSRVRTGRSIRGFCLPPHCSRGERRAIEKLAVEALSSLDGDLAGRYYALKSMTEAEQQQLIDDHFLFDKPVSPLLLASGMARDWPDARGIWHNDNKTFLVWINEEDHLRVISMQKGGNMKEVFTRFCNGLTQIETLFKSKNYEFMWNPHLGYILTCPSNLGTGLRAGVHIKLPHLGKHEKFPEVLKRLRLQKRGTGGVDTAAVGGVFDVSNADRLGFSEVELVQMVVDGVKLLIEMEQRLEQGQAIDDLVPAQK.

Ser4 carries the phosphoserine modification. The Phosphagen kinase N-terminal domain maps to 11–98; sequence KLRFPAEDEF…FDPIIEDRHG (88 aa). Thr35 bears the Phosphothreonine mark. Lys45 participates in a covalent cross-link: Glycyl lysine isopeptide (Lys-Gly) (interchain with G-Cter in ubiquitin). A creatine-binding site is contributed by Val72. Positions 96–110 are enriched in basic and acidic residues; sequence RHGGYKPSDEHKTDL. The tract at residues 96–123 is disordered; that stretch reads RHGGYKPSDEHKTDLNPDNLQGGDDLDP. Residues Lys101 and Lys107 each participate in a glycyl lysine isopeptide (Lys-Gly) (interchain with G-Cter in ubiquitin) cross-link. Tyr125 is subject to Phosphotyrosine. Residues 125 to 367 enclose the Phosphagen kinase C-terminal domain; sequence YVLSSRVRTG…KLLIEMEQRL (243 aa). ATP is bound by residues 128-132, Arg130, Arg132, and His191; that span reads SSRVR. Residues 130 to 138 form an internal MTS-like signal region; that stretch reads RVRTGRSIR. Ser199 is modified (phosphoserine). A creatine-binding site is contributed by Glu232. Arg236 is a binding site for ATP. Residue Tyr269 is modified to 3'-nitrotyrosine. Ser285 contributes to the creatine binding site. Residues Arg292, 292 to 296, Arg320, 320 to 325, and Asp335 contribute to the ATP site; these read RAGVH and RGTGGV. Thr322 carries the post-translational modification Phosphothreonine. Lys381 is covalently cross-linked (Glycyl lysine isopeptide (Lys-Gly) (interchain with G-Cter in ubiquitin)).

This sequence belongs to the ATP:guanido phosphotransferase family. In terms of assembly, dimer of identical or non-identical chains, which can be either B (brain type) or M (muscle type). With MM being the major form in skeletal muscle and myocardium, MB existing in myocardium, and BB existing in many tissues, especially brain. Interacts with SLC12A6 (via C-terminus); the interaction may be required for SLC12A6 potassium-chloride cotransport activity. Post-translationally, ubiquitinated by the ECS(ASB9) complex, leading to its degradation by the proteasome.

Its subcellular location is the cytoplasm. The protein localises to the cytosol. The protein resides in the mitochondrion. It localises to the cell membrane. It carries out the reaction creatine + ATP = N-phosphocreatine + ADP + H(+). Reversibly catalyzes the transfer of phosphate between ATP and various phosphogens (e.g. creatine phosphate). Creatine kinase isoenzymes play a central role in energy transduction in tissues with large, fluctuating energy demands, such as skeletal muscle, heart, brain and spermatozoa. Acts as a key regulator of adaptive thermogenesis as part of the futile creatine cycle: localizes to the mitochondria of thermogenic fat cells and acts by mediating phosphorylation of creatine to initiate a futile cycle of creatine phosphorylation and dephosphorylation. During the futile creatine cycle, creatine and N-phosphocreatine are in a futile cycle, which dissipates the high energy charge of N-phosphocreatine as heat without performing any mechanical or chemical work. The chain is Creatine kinase B-type (CKB) from Sus scrofa (Pig).